Here is a 79-residue protein sequence, read N- to C-terminus: Conotoxin Cal9.2a (79 aa).

The N-terminal stretch at 1 to 23 (MNCYLILTVALLLTSAMTGTTTA) is a signal peptide. Residues 24–33 (GQLNKKGVTL) constitute a propeptide that is removed on maturation. 3 disulfides stabilise this stretch: Cys41–Cys58, Cys46–Cys68, and Cys48–Cys73.

Expressed by the venom duct.

The protein resides in the secreted. Its function is as follows. Probable neurotoxin with unknown target. Possibly targets ion channels. The polypeptide is Conotoxin Cal9.2a (Californiconus californicus (California cone)).